The sequence spans 388 residues: Formate-dependent phosphoribosylglycinamide formyltransferase (388 aa).

N(1)-(5-phospho-beta-D-ribosyl)glycinamide is bound by residues 11–12 and Glu-71; that span reads EL. Residues Arg-103, Lys-144, 149–154, 184–187, and Glu-192 contribute to the ATP site; these read SSGKGQ and EEFI. The ATP-grasp domain maps to 108–300; that stretch reads DLAAKELGLK…EFELHLRAVL (193 aa). Residues Glu-257 and Glu-270 each coordinate Mg(2+). N(1)-(5-phospho-beta-D-ribosyl)glycinamide-binding positions include Asp-277, Lys-349, and 356-357; that span reads RR.

It belongs to the PurK/PurT family. In terms of assembly, homodimer.

The catalysed reaction is N(1)-(5-phospho-beta-D-ribosyl)glycinamide + formate + ATP = N(2)-formyl-N(1)-(5-phospho-beta-D-ribosyl)glycinamide + ADP + phosphate + H(+). The protein operates within purine metabolism; IMP biosynthesis via de novo pathway; N(2)-formyl-N(1)-(5-phospho-D-ribosyl)glycinamide from N(1)-(5-phospho-D-ribosyl)glycinamide (formate route): step 1/1. Its function is as follows. Involved in the de novo purine biosynthesis. Catalyzes the transfer of formate to 5-phospho-ribosyl-glycinamide (GAR), producing 5-phospho-ribosyl-N-formylglycinamide (FGAR). Formate is provided by PurU via hydrolysis of 10-formyl-tetrahydrofolate. The polypeptide is Formate-dependent phosphoribosylglycinamide formyltransferase (Bacteroides thetaiotaomicron (strain ATCC 29148 / DSM 2079 / JCM 5827 / CCUG 10774 / NCTC 10582 / VPI-5482 / E50)).